The following is a 151-amino-acid chain: Small ribosomal subunit protein uS15 (151 aa).

The tract at residues 1 to 20 is disordered; sequence MGRMHSNGKGISGSSLPYNR.

Belongs to the universal ribosomal protein uS15 family. As to quaternary structure, component of the small ribosomal subunit. Part of the small subunit (SSU) processome, composed of more than 70 proteins and the RNA chaperone small nucleolar RNA (snoRNA) U3.

It localises to the cytoplasm. Its subcellular location is the nucleus. It is found in the nucleolus. Functionally, component of the small ribosomal subunit. The ribosome is a large ribonucleoprotein complex responsible for the synthesis of proteins in the cell. Part of the small subunit (SSU) processome, first precursor of the small eukaryotic ribosomal subunit. During the assembly of the SSU processome in the nucleolus, many ribosome biogenesis factors, an RNA chaperone and ribosomal proteins associate with the nascent pre-rRNA and work in concert to generate RNA folding, modifications, rearrangements and cleavage as well as targeted degradation of pre-ribosomal RNA by the RNA exosome. The chain is Small ribosomal subunit protein uS15 (rps13) from Dictyostelium discoideum (Social amoeba).